The chain runs to 275 residues: Alpha carbonic anhydrase 7 (275 aa).

A signal peptide spans 1–27; it reads MVNYSSISCIFFVALFSIFTIVSISSA. Residues N3 and N96 are each glycosylated (N-linked (GlcNAc...) asparagine). One can recognise an Alpha-carbonic anhydrase domain in the interval 38 to 272; it reads REFNYKKNDE…TNKRIVHLYR (235 aa). A disulfide bond links C63 and C222. H104 serves as the catalytic Proton acceptor. Residues H130, H132, and H149 each coordinate Zn(2+). 218–219 is a binding site for substrate; the sequence is TT. N225 carries an N-linked (GlcNAc...) asparagine glycan.

The protein belongs to the alpha-class carbonic anhydrase family. The cofactor is Zn(2+). In terms of processing, N-glycosylated.

It localises to the plastid. It is found in the chloroplast stroma. The enzyme catalyses hydrogencarbonate + H(+) = CO2 + H2O. Its function is as follows. Reversible hydration of carbon dioxide. The polypeptide is Alpha carbonic anhydrase 7 (ACA7) (Arabidopsis thaliana (Mouse-ear cress)).